A 196-amino-acid chain; its full sequence is Thymidine kinase (196 aa).

17–24 (GPMFAGKT) lines the ATP pocket. Residue E92 is the Proton acceptor of the active site. Substrate is bound at residue F121. Residues C146 and C149 each contribute to the Zn(2+) site. Substrate is bound at residue 166-170 (LILAG). Residues C179 and C182 each contribute to the Zn(2+) site.

Belongs to the thymidine kinase family.

The enzyme catalyses thymidine + ATP = dTMP + ADP + H(+). In terms of biological role, phosphorylates thymidine. ASFV replicates in the cytoplasm of infected cells and contains genes encoding a number of enzymes needed for DNA synthesis, including thymidine kinase. Important for growth in swine macrophages in vitro and is a virus virulence factor in swine. The chain is Thymidine kinase from Ornithodoros (relapsing fever ticks).